We begin with the raw amino-acid sequence, 139 residues long: Ribosome-binding factor A (139 aa).

It belongs to the RbfA family. In terms of assembly, monomer. Binds 30S ribosomal subunits, but not 50S ribosomal subunits or 70S ribosomes.

It is found in the cytoplasm. Functionally, one of several proteins that assist in the late maturation steps of the functional core of the 30S ribosomal subunit. Associates with free 30S ribosomal subunits (but not with 30S subunits that are part of 70S ribosomes or polysomes). Required for efficient processing of 16S rRNA. May interact with the 5'-terminal helix region of 16S rRNA. This chain is Ribosome-binding factor A, found in Methylobacterium sp. (strain 4-46).